A 208-amino-acid polypeptide reads, in one-letter code: FMN-dependent NADH:quinone oxidoreductase 1 (208 aa).

It belongs to the azoreductase type 1 family. In terms of assembly, homodimer. It depends on FMN as a cofactor.

It catalyses the reaction 2 a quinone + NADH + H(+) = 2 a 1,4-benzosemiquinone + NAD(+). The catalysed reaction is N,N-dimethyl-1,4-phenylenediamine + anthranilate + 2 NAD(+) = 2-(4-dimethylaminophenyl)diazenylbenzoate + 2 NADH + 2 H(+). Quinone reductase that provides resistance to thiol-specific stress caused by electrophilic quinones. In terms of biological role, also exhibits azoreductase activity. Catalyzes the reductive cleavage of the azo bond in aromatic azo compounds to the corresponding amines. In Bacillus thuringiensis subsp. konkukian (strain 97-27), this protein is FMN-dependent NADH:quinone oxidoreductase 1.